The sequence spans 478 residues: Alpha-1,3-mannosyl-glycoprotein 4-beta-N-acetylglucosaminyltransferase C (478 aa).

Over 1-23 (MFKFHQVKHIFEILDKMRCLRKR) the chain is Cytoplasmic. The helical; Signal-anchor for type II membrane protein transmembrane segment at 24–44 (FTVSFLGVLVIFLLFMNLYIE) threads the bilayer. Topologically, residues 45-478 (DSYVLEGDKQ…IIRSISIWTS (434 aa)) are lumenal. 3 N-linked (GlcNAc...) asparagine glycosylation sites follow: asparagine 84, asparagine 215, and asparagine 348.

This sequence belongs to the glycosyltransferase 54 family. Requires a divalent metal cation as cofactor.

Its subcellular location is the golgi apparatus membrane. It carries out the reaction N(4)-{beta-D-GlcNAc-(1-&gt;2)-alpha-D-Man-(1-&gt;3)-[beta-D-GlcNAc-(1-&gt;2)-alpha-D-Man-(1-&gt;6)]-beta-D-Man-(1-&gt;4)-beta-D-GlcNAc-(1-&gt;4)-beta-D-GlcNAc}-L-asparaginyl-[protein] + UDP-N-acetyl-alpha-D-glucosamine = N(4)-{beta-D-GlcNAc-(1-&gt;2)-[beta-D-GlcNAc-(1-&gt;4)]-alpha-D-Man-(1-&gt;3)-[beta-D-GlcNAc-(1-&gt;2)-alpha-D-Man-(1-&gt;6)]-beta-D-Man-(1-&gt;4)-beta-D-GlcNAc-(1-&gt;4)-beta-D-GlcNAc}-L-asparaginyl-[protein] + UDP + H(+). It participates in protein modification; protein glycosylation. Functionally, glycosyltransferase that participates in the transfer of N-acetylglucosamine (GlcNAc) to the core mannose residues of N-linked glycans. Catalyzes the formation of the GlcNAcbeta1-4 branch on the GlcNAcbeta1-2Manalpha1-3 arm of the core structure of N-linked glycans. Essential for the production of tri- and tetra-antennary N-linked sugar chains. Does not catalyze the transfer of GlcNAc to the Manalpha1-6 arm to form GlcNAcBeta1-4Manalpha1-6 linkage ('GnT-VI' activity). This Sus scrofa (Pig) protein is Alpha-1,3-mannosyl-glycoprotein 4-beta-N-acetylglucosaminyltransferase C (MGAT4C).